The primary structure comprises 301 residues: GTPase IMAP family member 3 (301 aa).

The Cytoplasmic portion of the chain corresponds to 1-279 (METLQNVVTG…GKKLEVLHSD (279 aa)). The AIG1-type G domain occupies 20–223 (SRPLRILLVG…HSNDLFLHAE (204 aa)). GTP contacts are provided by residues 29–37 (GKSGCGKSA), serine 50, 147–149 (RKE), and asparagine 184. Residues 263 to 301 (VLKVLPIGKKLEVLHSDFCWYLVLAILIFFVFFFLLFYV) form a required for targeting to the endoplasmic reticulum region. The chain crosses the membrane as a helical; Anchor for type IV membrane protein span at residues 280 to 300 (FCWYLVLAILIFFVFFFLLFY). A topological domain (lumenal) is located at residue valine 301.

It belongs to the TRAFAC class TrmE-Era-EngA-EngB-Septin-like GTPase superfamily. AIG1/Toc34/Toc159-like paraseptin GTPase family. IAN subfamily. In terms of assembly, interacts with BAD, BAK1, BAX, BCL2, BCL2L1/Bcl-xL and BCL2L11/BimEL. The interaction with BAX is increased, when cells initiate apoptosis upon IL2 withdrawal. In terms of tissue distribution, expressed in thymus (in thymocytes), spleen (in splenocytes), lymph node and, at lower levels, in lung. Highly expressed in T lymphocytes.

It is found in the endoplasmic reticulum membrane. Functionally, during thymocyte development, may support the positive selection of CD4 and CD8 T cells. May play a role in mitochondrial DNA segregation in hematopoietic tissues. Binds GTP. The chain is GTPase IMAP family member 3 (Gimap3) from Mus musculus (Mouse).